The sequence spans 80 residues: Conotoxin Pu11.1 (80 aa).

A signal peptide spans 1-19 (MKLVLAIVLILMLLSLSTG). Positions 20 to 42 (AEMSDNHASRSATALTDRLLGPK) are excised as a propeptide. 4 disulfide bridges follow: Cys-46-Cys-60, Cys-53-Cys-65, Cys-59-Cys-72, and Cys-64-Cys-79.

This sequence belongs to the conotoxin I3 superfamily. As to expression, expressed by the venom duct.

The protein resides in the secreted. This chain is Conotoxin Pu11.1, found in Conus pulicarius (Flea-bitten cone).